A 331-amino-acid polypeptide reads, in one-letter code: Probable allantoicase (331 aa).

It belongs to the allantoicase family.

It catalyses the reaction allantoate + H2O = (S)-ureidoglycolate + urea. It participates in nitrogen metabolism; (S)-allantoin degradation; (S)-ureidoglycolate from allantoate (aminidohydrolase route): step 1/1. The sequence is that of Probable allantoicase from Pseudomonas fluorescens (strain SBW25).